The following is a 161-amino-acid chain: ATP synthase subunit b 1 (161 aa).

A helical transmembrane segment spans residues 5–25; it reads AETWVAVAFVLMVALFIYFGA.

Belongs to the ATPase B chain family. F-type ATPases have 2 components, F(1) - the catalytic core - and F(0) - the membrane proton channel. F(1) has five subunits: alpha(3), beta(3), gamma(1), delta(1), epsilon(1). F(0) has three main subunits: a(1), b(2) and c(10-14). The alpha and beta chains form an alternating ring which encloses part of the gamma chain. F(1) is attached to F(0) by a central stalk formed by the gamma and epsilon chains, while a peripheral stalk is formed by the delta and b chains.

It localises to the cell inner membrane. Its function is as follows. F(1)F(0) ATP synthase produces ATP from ADP in the presence of a proton or sodium gradient. F-type ATPases consist of two structural domains, F(1) containing the extramembraneous catalytic core and F(0) containing the membrane proton channel, linked together by a central stalk and a peripheral stalk. During catalysis, ATP synthesis in the catalytic domain of F(1) is coupled via a rotary mechanism of the central stalk subunits to proton translocation. Component of the F(0) channel, it forms part of the peripheral stalk, linking F(1) to F(0). This Afipia carboxidovorans (strain ATCC 49405 / DSM 1227 / KCTC 32145 / OM5) (Oligotropha carboxidovorans) protein is ATP synthase subunit b 1.